Here is a 278-residue protein sequence, read N- to C-terminus: Biotin synthase (278 aa).

One can recognise a Radical SAM core domain in the interval 1-227; sequence MQIMLCAISN…QSVVMVAGGR (227 aa). [4Fe-4S] cluster contacts are provided by cysteine 16, cysteine 20, and cysteine 23. 3 residues coordinate [2Fe-2S] cluster: cysteine 60, asparagine 96, and cysteine 154.

Belongs to the radical SAM superfamily. Biotin synthase family. Homodimer. [4Fe-4S] cluster is required as a cofactor. [2Fe-2S] cluster serves as cofactor.

It catalyses the reaction (4R,5S)-dethiobiotin + (sulfur carrier)-SH + 2 reduced [2Fe-2S]-[ferredoxin] + 2 S-adenosyl-L-methionine = (sulfur carrier)-H + biotin + 2 5'-deoxyadenosine + 2 L-methionine + 2 oxidized [2Fe-2S]-[ferredoxin]. Its pathway is cofactor biosynthesis; biotin biosynthesis; biotin from 7,8-diaminononanoate: step 2/2. Its function is as follows. Catalyzes the conversion of dethiobiotin (DTB) to biotin by the insertion of a sulfur atom into dethiobiotin via a radical-based mechanism. This Campylobacter jejuni subsp. jejuni serotype O:2 (strain ATCC 700819 / NCTC 11168) protein is Biotin synthase.